The following is a 492-amino-acid chain: MKQKCVLIITDGIGYNKNSKFNAFEAAKKPSYEKLFKEVPNSLLKTSGLAVGLPEGQMGNSEVGHMCIGSGRIIYQNLVRINKAIENKELEKNENLQKLLAKCKRVHIIGLYSDGGVHSMDTHFKAMLEICAKNGNEVFAHAITDGRDVSPKSGLNFIKDLKEFCENLGVHFATLCGRFYAMDRDKRWDRVKEYYECLLGKAYKVPNLLEYLQKSYDENVTDEFIKAAQNENYKGMREEDGIIFINFRNDRMKQLVEVLNSKDFKEFEREKIFENLLTMSVYDDKFKLPVLFEKEKIENTLAQVISKAGLSQLHTAETEKYAHVTFFFNGGKEELLENETRVLIPSPKVKTYDEKPQMSAFEVCDAVKKGIEKGEDFIVVNFANGDMVGHTGDFNAAIKAVEAVDTCLGEIVECAKKHDYAFIITSDHGNCEAMQDEKGNLLTNHTTFDVFVFVQAKGVSKIKDNMGLSNIAASVLKILDLEIPKEMNEALF.

2 residues coordinate Mn(2+): Asp11 and Ser61. Ser61 functions as the Phosphoserine intermediate in the catalytic mechanism. Substrate is bound by residues His118, 147-148 (RD), Arg178, Arg184, 248-251 (RNDR), and Lys320. The Mn(2+) site is built by Asp386, His390, Asp427, His428, and His445.

The protein belongs to the BPG-independent phosphoglycerate mutase family. Monomer. Mn(2+) serves as cofactor.

The enzyme catalyses (2R)-2-phosphoglycerate = (2R)-3-phosphoglycerate. It participates in carbohydrate degradation; glycolysis; pyruvate from D-glyceraldehyde 3-phosphate: step 3/5. Its function is as follows. Catalyzes the interconversion of 2-phosphoglycerate and 3-phosphoglycerate. The sequence is that of 2,3-bisphosphoglycerate-independent phosphoglycerate mutase from Campylobacter jejuni subsp. jejuni serotype O:6 (strain 81116 / NCTC 11828).